Here is a 712-residue protein sequence, read N- to C-terminus: Probable serine/threonine-protein kinase fhkE (712 aa).

Residues Ile-46–Val-100 form the FHA domain. Residues Tyr-145–Phe-411 form the Protein kinase domain. Residues Leu-151–Val-159 and Lys-174 contribute to the ATP site. Asp-270 functions as the Proton acceptor in the catalytic mechanism. The stretch at Asn-414 to Thr-442 forms a coiled coil. Positions Ala-431–Arg-695 are disordered. Low complexity-rich tracts occupy residues Glu-436–Asn-446, Gly-459–Asn-481, Asn-514–Thr-571, Asn-595–Ile-605, and Asn-616–Asn-639. Polar residues predominate over residues Pro-669–Gly-678.

The protein belongs to the protein kinase superfamily. CAMK Ser/Thr protein kinase family. CHK2 subfamily.

The enzyme catalyses L-seryl-[protein] + ATP = O-phospho-L-seryl-[protein] + ADP + H(+). It carries out the reaction L-threonyl-[protein] + ATP = O-phospho-L-threonyl-[protein] + ADP + H(+). The polypeptide is Probable serine/threonine-protein kinase fhkE (fhkE) (Dictyostelium discoideum (Social amoeba)).